Here is a 430-residue protein sequence, read N- to C-terminus: Enolase (430 aa).

Residues 1-140 (MPYIVDVYAR…YQYLGGFNSK (140 aa)) are sufficient for secretion. At Thr-141 the chain carries Phosphothreonine. Gln-163 contributes to the (2R)-2-phosphoglycerate binding site. Glu-205 acts as the Proton donor in catalysis. Asp-242 is a binding site for Mg(2+). Position 259 is a phosphoserine (Ser-259). At Tyr-281 the chain carries Phosphotyrosine. Mg(2+) is bound by residues Glu-287 and Asp-314. Position 325 is a phosphoserine (Ser-325). Residues Lys-339, Arg-368, Ser-369, and Lys-390 each coordinate (2R)-2-phosphoglycerate. Lys-339 serves as the catalytic Proton acceptor.

Belongs to the enolase family. In terms of assembly, homooctamer. Component of the RNA degradosome complex composed of rny, rnjA, rnjB, pnp, pfkA and eno (although rnjA and rnjB's presence is controversial). Requires Mg(2+) as cofactor. In terms of processing, phosphorylated during sporulation.

It is found in the cytoplasm. It localises to the secreted. Its subcellular location is the cell surface. It carries out the reaction (2R)-2-phosphoglycerate = phosphoenolpyruvate + H2O. It participates in carbohydrate degradation; glycolysis; pyruvate from D-glyceraldehyde 3-phosphate: step 4/5. Covalent binding to the substrate (probably 2-PG) at Lys-339 of a small fraction of enolase causes inactivation of the enzyme, and possibly serves as a signal for the export of the protein. Citrate acts as a non-competitive inhibitor for both forward and reverse reactions, probably by chelating Mg(2+). In terms of biological role, catalyzes the reversible conversion of 2-phosphoglycerate (2-PG) into phosphoenolpyruvate (PEP). It is essential for the degradation of carbohydrates via glycolysis. Its function is as follows. A component of the RNA degradosome, a multi-enzyme complex involved in RNA processing and messenger RNA degradation. The sequence is that of Enolase from Bacillus subtilis (strain 168).